Here is a 435-residue protein sequence, read N- to C-terminus: Phospholipase A1 EG1, chloroplastic/mitochondrial (435 aa).

The transit peptide at 1–31 (MTLPRQCAAACRTGGGGGGVVRCRAVAAAGG) directs the protein to the chloroplast and mitochondrion. Positions 264–268 (GHSMG) match the GXSXG motif. S266 serves as the catalytic Acyl-ester intermediate. Catalysis depends on charge relay system residues D324 and H371.

It belongs to the AB hydrolase superfamily. Lipase family.

It localises to the mitochondrion. The protein localises to the plastid. It is found in the chloroplast. The catalysed reaction is a 1,2-diacyl-sn-glycero-3-phosphocholine + H2O = a 2-acyl-sn-glycero-3-phosphocholine + a fatty acid + H(+). Its function is as follows. Phospholipase that releases free fatty acids from phospholipids. Catalyzes the initial step of jasmonate (JA) biosynthesis. Required for the biosynthesis of endogenous JA in seedling, inflorescence and spikelets. Not essential for JA biosynthesis after wounding. Mediates spikelet development and specification of empty-glume identity. Functions in a high temperature-dependent manner to maintain floral developmental robustness under heat stress conditions. Functions by safeguarding the expression of several floral identity genes, such as MADS1, MADS6 and G1. This chain is Phospholipase A1 EG1, chloroplastic/mitochondrial, found in Oryza sativa subsp. indica (Rice).